Here is a 109-residue protein sequence, read N- to C-terminus: Ig kappa chain V region S211 (109 aa).

The framework-1 stretch occupies residues 1–23 (DVQMTQSPSYLAASPGESVSISC). Residues 24 to 35 (KASNKSISNNLA) are complementarity-determining-1. The interval 36 to 50 (WYZZKPGKANKLLIS) is framework-2. Residues 51–57 (SGSTLQS) form a complementarity-determining-2 region. Residues 58–89 (GTPSRFSGSGSDTDFTLTIRSLEFQDFAVYYC) form a framework-3 region. The segment at 90–98 (ZZYNEPYYT) is complementarity-determining-3. The segment at 99–108 (FGAGTMLELK) is framework-4.

The sequence is that of Ig kappa chain V region S211 from Rattus norvegicus (Rat).